We begin with the raw amino-acid sequence, 475 residues long: MNNLFFSKILRSDNIHFVGIGGVGMGALAEICIKLGYKISGSDIKENLITKKLSVLGAKIYNQHCANNIIESTIIVVSSAIKEDNLEIIYAKKLNIPVVKRAEFLSELMRFKYGIIVSGTHGKTTTTSIISYIYKEAKLFPTYLYGGRLNNSDDYGNLGNSKYWISEADESDNSFLFFRPIISVVTNIEKDHLESYQGNFKKLKESFIKFLHNIPFYGYSVLCLDDIEIKKIIPLINKKIVTYGFNRNSDFCITKFFQSNKKIIFIVYIKHQKRYLKFVSNLLGKHNALNITAAITIAIKEGIKYNIILNSIKKFPGINRRFDFINKYDLSNLNNKKGTITIVDDYGHHPTELKLTIKSVKKIWNKRRLIMIFQPHKYTRTKYLYNYFVKVLSTVDILLIMEIYSAGENPIYKINSKNLCQSIMALKRSHVIFIPNEKFLFKKLELLLKNNDILLLQGAGTIENIFKKLTSKLLL.

119 to 125 (GTHGKTT) contributes to the ATP binding site.

This sequence belongs to the MurCDEF family.

It localises to the cytoplasm. It catalyses the reaction UDP-N-acetyl-alpha-D-muramate + L-alanine + ATP = UDP-N-acetyl-alpha-D-muramoyl-L-alanine + ADP + phosphate + H(+). It participates in cell wall biogenesis; peptidoglycan biosynthesis. Its function is as follows. Cell wall formation. The sequence is that of UDP-N-acetylmuramate--L-alanine ligase from Wigglesworthia glossinidia brevipalpis.